We begin with the raw amino-acid sequence, 539 residues long: Chaperonin GroEL 1 (539 aa).

Residues 30–33 (TLGP), Lys51, 87–91 (DGTTT), Gly415, 480–482 (NAA), and Asp496 each bind ATP.

The protein belongs to the chaperonin (HSP60) family. Forms a cylinder of 14 subunits composed of two heptameric rings stacked back-to-back. Interacts with the co-chaperonin GroES.

Its subcellular location is the cytoplasm. The catalysed reaction is ATP + H2O + a folded polypeptide = ADP + phosphate + an unfolded polypeptide.. In terms of biological role, together with its co-chaperonin GroES, plays an essential role in assisting protein folding. The GroEL-GroES system forms a nano-cage that allows encapsulation of the non-native substrate proteins and provides a physical environment optimized to promote and accelerate protein folding. This chain is Chaperonin GroEL 1, found in Erythrobacter litoralis (strain HTCC2594).